We begin with the raw amino-acid sequence, 295 residues long: Glycine N-methyltransferase (295 aa).

(6S)-5-methyl-5,6,7,8-tetrahydrofolate-binding residues include serine 4 and tyrosine 6. Phosphoserine is present on serine 10. Tyrosine 22, tryptophan 31, tyrosine 34, and arginine 41 together coordinate S-adenosyl-L-methionine. Tyrosine 34 is subject to Phosphotyrosine. An N6-succinyllysine modification is found at lysine 46. S-adenosyl-L-methionine contacts are provided by residues alanine 65, 86–88 (DAS), 117–118 (NW), 139–142 (LGNS), and arginine 178. Lysine 193, lysine 198, and lysine 203 each carry N6-succinyllysine. Histidine 217 is a (6S)-5-methyl-5,6,7,8-tetrahydrofolate binding site. Tyrosine 223 is a binding site for S-adenosyl-L-methionine. Arginine 242 serves as a coordination point for (6S)-5-methyl-5,6,7,8-tetrahydrofolate.

The protein belongs to the class I-like SAM-binding methyltransferase superfamily. Glycine N-methyltransferase family. Homotetramer. In terms of tissue distribution, abundant in liver.

The protein localises to the cytoplasm. The catalysed reaction is glycine + S-adenosyl-L-methionine = sarcosine + S-adenosyl-L-homocysteine + H(+). With respect to regulation, inhibited by 5-methyltetrahydrofolate monoglutamate and by 5-methyltetrahydrofolate pentaglutamate, inhibition is much more effective by the pentaglutamate form than by the monoglutamate form. Two molecules of 5-methyltetrahydrofolate are bound per tetramer. The binding sites are localized between subunits. Inhibitor binding may preclude movements of the polypeptide chain that are necessary for enzyme activity. Catalyzes the methylation of glycine by using S-adenosylmethionine (AdoMet) to form N-methylglycine (sarcosine) with the concomitant production of S-adenosylhomocysteine (AdoHcy), a reaction regulated by the binding of 5-methyltetrahydrofolate. Plays an important role in the regulation of methyl group metabolism by regulating the ratio between S-adenosyl-L-methionine and S-adenosyl-L-homocysteine. This chain is Glycine N-methyltransferase (GNMT), found in Oryctolagus cuniculus (Rabbit).